Consider the following 354-residue polypeptide: Uroporphyrinogen decarboxylase (354 aa).

Substrate-binding positions include 27 to 31 (RQAGR), F46, D77, Y154, T209, and H327.

This sequence belongs to the uroporphyrinogen decarboxylase family. Homodimer.

It is found in the cytoplasm. The catalysed reaction is uroporphyrinogen III + 4 H(+) = coproporphyrinogen III + 4 CO2. It functions in the pathway porphyrin-containing compound metabolism; protoporphyrin-IX biosynthesis; coproporphyrinogen-III from 5-aminolevulinate: step 4/4. Catalyzes the decarboxylation of four acetate groups of uroporphyrinogen-III to yield coproporphyrinogen-III. The polypeptide is Uroporphyrinogen decarboxylase (Pseudomonas putida (strain ATCC 47054 / DSM 6125 / CFBP 8728 / NCIMB 11950 / KT2440)).